The following is a 441-amino-acid chain: Anti-sigma-I factor RsgI (441 aa).

At 1-53 the chain is on the cytoplasmic side; the sequence is MMNKGIVMDIKKHSVVVLTPNGEFITCKRKGDSCMIGEEISFDEQEQKASRFS. Residues 3–51 enclose the RsgI N-terminal anti-sigma domain; it reads NKGIVMDIKKHSVVVLTPNGEFITCKRKGDSCMIGEEISFDEQEQKASR. Residues 54-76 traverse the membrane as a helical segment; the sequence is IPYFLKPASLLVACFLCALLFFY. The Extracellular segment spans residues 77 to 441; sequence NQPEEKVFAY…HQQGNEKKNQ (365 aa). The interval 213 to 441 is disordered; the sequence is ENEKNKSVTP…HQQGNEKKNQ (229 aa). The segment covering 219-230 has biased composition (polar residues); it reads SVTPPATPSNPV. The span at 240–251 shows a compositional bias: low complexity; it reads PDSSPDVVPDLS. Over residues 252 to 281 the composition is skewed to basic and acidic residues; the sequence is SVKDKKYEKPEYKEQKKIEEQPTKQIKENN. Composition is skewed to low complexity over residues 282–328, 336–358, and 366–408; these read GRGS…QQGN, NNGH…QQGN, and NNGH…NGRG. The span at 411–428 shows a compositional bias: polar residues; it reads KENVGNEQGNNGRGSQQE. Basic and acidic residues predominate over residues 429 to 441; that stretch reads NRGHQQGNEKKNQ.

In terms of assembly, interacts (via RsgI N-terminal anti-sigma domain) with SigI.

The protein resides in the cell membrane. Anti-sigma factor for SigI. Negatively regulates SigI activity through direct interaction. Has no direct effect on virulence gene expression. This Bacillus anthracis protein is Anti-sigma-I factor RsgI.